A 439-amino-acid chain; its full sequence is Beta-1,3-galactosyl-O-glycosyl-glycoprotein beta-1,6-N-acetylglucosaminyltransferase (439 aa).

Residues 1-11 (MVGWKKKKLCR) lie on the Cytoplasmic side of the membrane. A helical; Signal-anchor for type II membrane protein membrane pass occupies residues 12–29 (GHHLWVLGCYMLLAVVSL). Residues 30-439 (RLSLRFKCDV…RHKAIYGTEL (410 aa)) are Lumenal-facing. 2 N-linked (GlcNAc...) asparagine; by host glycosylation sites follow: Asn-71 and Asn-107. Disulfide bonds link Cys-72–Cys-229, Cys-163–Cys-383, Cys-184–Cys-211, and Cys-392–Cys-424.

It belongs to the glycosyltransferase 14 family.

The protein resides in the host Golgi apparatus membrane. The catalysed reaction is a 3-O-[beta-D-galactosyl-(1-&gt;3)-N-acetyl-alpha-D-galactosaminyl]-L-seryl-[protein] + UDP-N-acetyl-alpha-D-glucosamine = 3-O-{beta-D-galactosyl-(1-&gt;3)-[N-acetyl-beta-D-glucosaminyl-(1-&gt;6)]-N-acetyl-alpha-D-galactosaminyl}-L-seryl-[protein] + UDP + H(+). It carries out the reaction a 3-O-[beta-D-galactosyl-(1-&gt;3)-N-acetyl-alpha-D-galactosaminyl]-L-threonyl-[protein] + UDP-N-acetyl-alpha-D-glucosamine = a 3-O-{beta-D-galactosyl-(1-&gt;3)-[N-acetyl-beta-D-glucosaminyl-(1-&gt;6)]-N-acetyl-alpha-D-galactosaminyl}-L-threonyl-[protein] + UDP + H(+). It catalyses the reaction a beta-D-Gal-(1-&gt;4)-beta-D-GlcNAc-(1-&gt;3)-beta-D-Gal-(1-&gt;4)-beta-D-GlcNAc derivative + UDP-N-acetyl-alpha-D-glucosamine = a beta-D-Gal-(1-&gt;4)-beta-D-GlcNAc-(1-&gt;3)-[beta-D-GlcNAc-(1-&gt;6)]-beta-D-Gal-(1-&gt;4)-N-acetyl-beta-D-glucosaminyl derivative + UDP + H(+). The enzyme catalyses 3-O-[N-acetyl-beta-D-glucosaminyl-(1-&gt;3)-N-acetyl-alpha-D-galactosaminyl]-L-seryl-[protein] + UDP-N-acetyl-alpha-D-glucosamine = 3-O-[N-acetyl-beta-D-glucosaminyl-(1-&gt;3)-[N-acetyl-beta-D-glucosaminyl-(1-&gt;6)]-N-acetyl-alpha-D-galactosaminyl]-L-seryl-[protein] + UDP + H(+). The catalysed reaction is a 3-O-[N-acetyl-beta-D-glucosaminyl-(1-&gt;3)-N-acetyl-alpha-D-galactosaminyl]-L-threonyl-[protein] + UDP-N-acetyl-alpha-D-glucosamine = 3-O-[N-acetyl-beta-D-glucosaminyl-(1-&gt;3)-[N-acetyl-beta-D-glucosaminyl-(1-&gt;6)]-N-acetyl-alpha-D-galactosaminyl]-L-threonyl-[protein] + UDP + H(+). The protein operates within protein modification; protein glycosylation. Non-essential glycosyltransferase that can synthesize all known mucin beta 6 N-acetylglucosaminides. Mediates core 2 and core 4 O-glycan branching, 2 important steps in mucin-type biosynthesis. Has also I-branching enzyme activity by converting linear into branched poly-N-acetyllactosaminoglycans. Contributes to the post-translational modifications of structural proteins. This chain is Beta-1,3-galactosyl-O-glycosyl-glycoprotein beta-1,6-N-acetylglucosaminyltransferase (Bo17), found in Bovine herpesvirus 4 (BoHV-4).